The primary structure comprises 492 residues: Uridine-cytidine kinase D (492 aa).

Positions 36 to 56 (PLPKNKKDHDQSIESDSSFTR) are disordered. 117 to 124 (GPVGAGKT) lines the ATP pocket. The CYTH domain occupies 290–460 (EPVYVCKAKY…PQTFLYLYFK (171 aa)). Residues 468-483 (PNYSKLKPNNTNSKIL) are compositionally biased toward low complexity. Residues 468–492 (PNYSKLKPNNTNSKILKNNKDKKNL) are disordered.

Belongs to the uridine kinase family.

The catalysed reaction is uridine + ATP = UMP + ADP + H(+). It catalyses the reaction cytidine + ATP = CMP + ADP + H(+). It functions in the pathway pyrimidine metabolism; CTP biosynthesis via salvage pathway; CTP from cytidine: step 1/3. The protein operates within pyrimidine metabolism; UMP biosynthesis via salvage pathway; UMP from uridine: step 1/1. Functionally, catalyzes the conversion of uridine into uridine monophosphate and cytidine into cytidine monophosphate in the pyrimidine salvage pathway. The sequence is that of Uridine-cytidine kinase D (udkD) from Dictyostelium discoideum (Social amoeba).